Reading from the N-terminus, the 296-residue chain is Putative fatty acid elongase DDB_G0272012 (296 aa).

A run of 7 helical transmembrane segments spans residues 51 to 71 (FQIL…IKFL), 83 to 103 (VSIL…VGIL), 134 to 154 (WSYI…IIVL), 159 to 179 (LIFL…YFMY), 184 to 204 (LQLW…YFYF), 220 to 240 (MIQI…SAAI), and 253 to 273 (AFIS…QFFV). Over residues 277–290 (SNKPTSSSSTTTPT) the composition is skewed to low complexity. Positions 277–296 (SNKPTSSSSTTTPTKTKKID) are disordered.

The protein belongs to the ELO family.

It is found in the membrane. The enzyme catalyses a very-long-chain acyl-CoA + malonyl-CoA + H(+) = a very-long-chain 3-oxoacyl-CoA + CO2 + CoA. In terms of biological role, could be implicated in synthesis of very long chain fatty acids. The sequence is that of Putative fatty acid elongase DDB_G0272012 from Dictyostelium discoideum (Social amoeba).